The following is a 229-amino-acid chain: Histone H3-like centromeric protein CSE4 (229 aa).

Polar residues predominate over residues 1–35; it reads MSSKQQWVSSAIQSDSSGRSLSNVNRLAGDQQSIN. A disordered region spans residues 1–78; sequence MSSKQQWVSS…DIETDYEDQA (78 aa). A compositionally biased stretch (basic and acidic residues) spans 53-68; that stretch reads PRREERRRYESSKSDL. Positions 115-132 match the Nuclear localization signal motif; that stretch reads KRREKQRKQSLKRVEKKY. Residues 132 to 229 form an H3-like region; that stretch reads YTPSELALYE…LARRIRGQFI (98 aa).

This sequence belongs to the histone H3 family. As to quaternary structure, component of centromeric nucleosomes, where DNA is wrapped around a histone octamer core. The octamer contains two molecules each of H2A, H2B, CSE4/CENPA and H4 assembled in one CSE4-H4 heterotetramer and two H2A-H2B heterodimers. Interacts with the inner kinetochore. Interacts with the central kinetochore protein CTF19. Interacts with YTA7. Ubiquitinated. Is degraded through ubiquitin-mediated proteolysis when not protected by its association to the kinetochore.

Its subcellular location is the nucleus. It localises to the chromosome. The protein localises to the centromere. Its function is as follows. Histone H3-like nucleosomal protein that is specifically found in centromeric nucleosomes. Replaces conventional H3 in the nucleosome core of centromeric chromatin that serves as an assembly site for the inner kinetochore. Required for recruitment and assembly of kinetochore proteins, mitotic progression and chromosome segregation. May serve as an epigenetic mark that propagates centromere identity through replication and cell division. Required for functional chromatin architecture at the yeast 2-micron circle partitioning locus and promotes equal plasmid segregation. The protein is Histone H3-like centromeric protein CSE4 (CSE4) of Saccharomyces cerevisiae (strain ATCC 204508 / S288c) (Baker's yeast).